The following is a 165-amino-acid chain: 3-isopropylmalate dehydratase small subunit (165 aa).

The protein belongs to the LeuD family. LeuD type 2 subfamily. In terms of assembly, heterodimer of LeuC and LeuD.

The catalysed reaction is (2R,3S)-3-isopropylmalate = (2S)-2-isopropylmalate. Its pathway is amino-acid biosynthesis; L-leucine biosynthesis; L-leucine from 3-methyl-2-oxobutanoate: step 2/4. Functionally, catalyzes the isomerization between 2-isopropylmalate and 3-isopropylmalate, via the formation of 2-isopropylmaleate. The chain is 3-isopropylmalate dehydratase small subunit from Saccharolobus islandicus (strain Y.N.15.51 / Yellowstone #2) (Sulfolobus islandicus).